A 916-amino-acid chain; its full sequence is Protein translocase subunit SecA (916 aa).

ATP contacts are provided by residues Gln88, 106–110 (GEGKT), and Asp519. Positions 902, 904, 913, and 914 each coordinate Zn(2+).

This sequence belongs to the SecA family. Monomer and homodimer. Part of the essential Sec protein translocation apparatus which comprises SecA, SecYEG and auxiliary proteins SecDF. Other proteins may also be involved. The cofactor is Zn(2+).

The protein localises to the cell inner membrane. It localises to the cytoplasm. It carries out the reaction ATP + H2O + cellular proteinSide 1 = ADP + phosphate + cellular proteinSide 2.. In terms of biological role, part of the Sec protein translocase complex. Interacts with the SecYEG preprotein conducting channel. Has a central role in coupling the hydrolysis of ATP to the transfer of proteins into and across the cell membrane, serving as an ATP-driven molecular motor driving the stepwise translocation of polypeptide chains across the membrane. This Treponema pallidum (strain Nichols) protein is Protein translocase subunit SecA.